We begin with the raw amino-acid sequence, 89 residues long: UPF0237 protein CPE1496 (89 aa).

One can recognise an ACT domain in the interval Val4–Asn84.

This sequence belongs to the UPF0237 family.

This chain is UPF0237 protein CPE1496, found in Clostridium perfringens (strain 13 / Type A).